The sequence spans 233 residues: Histidinol dehydrogenase (233 aa).

Residues serine 31, glutamine 53, and histidine 56 each coordinate substrate. Zn(2+) is bound by residues glutamine 53 and histidine 56. Residues glutamate 121 and histidine 122 each act as proton acceptor in the active site. 4 residues coordinate substrate: histidine 122, aspartate 155, glutamate 209, and histidine 214. Aspartate 155 serves as a coordination point for Zn(2+). Histidine 214 provides a ligand contact to Zn(2+).

It belongs to the histidinol dehydrogenase family. The cofactor is Zn(2+).

The catalysed reaction is L-histidinol + 2 NAD(+) + H2O = L-histidine + 2 NADH + 3 H(+). It participates in amino-acid biosynthesis; L-histidine biosynthesis; L-histidine from 5-phospho-alpha-D-ribose 1-diphosphate: step 9/9. Catalyzes the sequential NAD-dependent oxidations of L-histidinol to L-histidinaldehyde and then to L-histidine. This chain is Histidinol dehydrogenase (hisD), found in Thiocapsa roseopersicina.